The chain runs to 325 residues: MAMMTTTTTTFFHPLLPANTYKSGAVASSFVSVPRSSSLQFRSLVSDSTSICGPSKFTGKNRRVSVTVSAAATTEPLTVLVTGAGGRTGQIVYKKLKERSEQFVARGLVRTKESKEKINGEDEVFIGDIRDTASIAPAVEGIDALVILTSAVPQMKPGFDPSKGGRPEFFFDDGAYPEQVDWIGQKNQIDAAKAAGVKQIVLVGSMGGTNINHPLNSIGNANILVWKRKAEQYLADSGIPYTIIRAGGLQDKDGGIRELLVGKDDELLETETRTIARADVAEVCVQALQLEEAKFKALDLASKPEGTGTPTKDFKALFTQVTTKF.

A chloroplast-targeting transit peptide spans 1 to 69 (MAMMTTTTTT…KNRRVSVTVS (69 aa)). An N-acetylalanine modification is found at Ala-70.

It belongs to the NAD(P)-dependent epimerase/dehydratase family.

The protein resides in the plastid. Its subcellular location is the chloroplast. This is an uncharacterized protein from Arabidopsis thaliana (Mouse-ear cress).